The following is a 298-amino-acid chain: Ethanolamine ammonia-lyase small subunit (298 aa).

Adenosylcob(III)alamin contacts are provided by valine 210, glutamate 231, and cysteine 261.

This sequence belongs to the EutC family. In terms of assembly, the basic unit is a heterodimer which dimerizes to form tetramers. The heterotetramers trimerize; 6 large subunits form a core ring with 6 small subunits projecting outwards. It depends on adenosylcob(III)alamin as a cofactor.

The protein localises to the bacterial microcompartment. The enzyme catalyses ethanolamine = acetaldehyde + NH4(+). It participates in amine and polyamine degradation; ethanolamine degradation. Its function is as follows. Catalyzes the deamination of various vicinal amino-alcohols to oxo compounds. Allows this organism to utilize ethanolamine as the sole source of nitrogen and carbon in the presence of external vitamin B12. In Salmonella heidelberg (strain SL476), this protein is Ethanolamine ammonia-lyase small subunit.